The sequence spans 719 residues: Anaphase-promoting complex subunit 4 (719 aa).

The stretch at 57–96 (NSQRIWDVDFHDLEATELCWNHDGNLIVVGFKNGELKIID) is one WD repeat.

As to quaternary structure, the APC/C is composed of at least 13 subunits: apc1, apc2, nuc2, apc4, apc5, cut9, apc8, apc10, apc11, hcn1, apc13, apc14 and apc15. Interacts with apc1 and dim1.

Component of the anaphase-promoting complex/cyclosome (APC/C), a cell cycle-regulated E3 ubiquitin-protein ligase complex that controls progression through mitosis and the G1 phase of the cell cycle. The APC/C is thought to confer substrate specificity and, in the presence of ubiquitin-conjugating E2 enzymes, it catalyzes the formation of protein-ubiquitin conjugates that are subsequently degraded by the 26S proteasome. Has a role in promoting metaphase to anaphase transition via the ubiquitination of specific mitotic substrates. In Schizosaccharomyces pombe (strain 972 / ATCC 24843) (Fission yeast), this protein is Anaphase-promoting complex subunit 4 (cut20).